We begin with the raw amino-acid sequence, 428 residues long: Kynureninase (428 aa).

Pyridoxal 5'-phosphate-binding positions include threonine 104, threonine 105, 132–135 (FPSD), aspartate 213, histidine 216, and tyrosine 238. At lysine 239 the chain carries N6-(pyridoxal phosphate)lysine. Tryptophan 267 and threonine 295 together coordinate pyridoxal 5'-phosphate.

This sequence belongs to the kynureninase family. In terms of assembly, homodimer. Pyridoxal 5'-phosphate is required as a cofactor.

It carries out the reaction L-kynurenine + H2O = anthranilate + L-alanine + H(+). It catalyses the reaction 3-hydroxy-L-kynurenine + H2O = 3-hydroxyanthranilate + L-alanine + H(+). Its pathway is amino-acid degradation; L-kynurenine degradation; L-alanine and anthranilate from L-kynurenine: step 1/1. It participates in cofactor biosynthesis; NAD(+) biosynthesis; quinolinate from L-kynurenine: step 2/3. In terms of biological role, catalyzes the cleavage of L-kynurenine (L-Kyn) and L-3-hydroxykynurenine (L-3OHKyn) into anthranilic acid (AA) and 3-hydroxyanthranilic acid (3-OHAA), respectively. This is Kynureninase from Bacillus mycoides (strain KBAB4) (Bacillus weihenstephanensis).